Reading from the N-terminus, the 382-residue chain is Palmitoyltransferase ZDHHC16B (382 aa).

Residues 1 to 75 are Cytoplasmic-facing; the sequence is MRSWRWSVSR…IYWLVDNMTR (75 aa). The helical transmembrane segment at 76 to 96 threads the bilayer; sequence WFGVVFVCLVMALTSSVVVIV. Topologically, residues 97-107 are lumenal; that stretch reads YLCVLPIIFSS. A helical transmembrane segment spans residues 108-130; the sequence is YPVYWILWHLCYGHWNLLMVVFH. Topologically, residues 131 to 196 are cytoplasmic; the sequence is YYKATTTQPG…NNCVGHFNHR (66 aa). Residues 153 to 203 form the DHHC domain; the sequence is TICKKCIVPKPARTHHCSICNRCILKMDHHCPWLNNCVGHFNHRYFFSFCL. The active-site S-palmitoyl cysteine intermediate is the C183. Residues 197–217 form a helical membrane-spanning segment; it reads YFFSFCLFMTMGCVYCSISAK. The Lumenal segment spans residues 218–275; the sequence is DMFLDAYNAIESGRYKGGASQGEAVPGAGLIYISFQHQSSYQTPPPAFTHQERMVHKS. Residues 276–296 form a helical membrane-spanning segment; the sequence is LVYLWVLTSSVAVALGALTLW. Residues 297–382 are Cytoplasmic-facing; it reads HAILITRGET…PAYKSSTTAI (86 aa).

It belongs to the DHHC palmitoyltransferase family.

Its subcellular location is the endoplasmic reticulum membrane. It carries out the reaction L-cysteinyl-[protein] + hexadecanoyl-CoA = S-hexadecanoyl-L-cysteinyl-[protein] + CoA. In terms of biological role, palmitoyl acyltransferase that mediates palmitoylation of proteins and is required during embryonic heart development. Involved in the proliferation of neural stem cells by regulating the FGF/ERK pathway. This chain is Palmitoyltransferase ZDHHC16B, found in Danio rerio (Zebrafish).